A 214-amino-acid polypeptide reads, in one-letter code: MVDEDRITLAPTEIYGRSDEEQSGPRIWRRKTEEPPGKCLVYSLTIIVIIFALCLILSSIFLRISKPEIETRSISTRDLRSGGNSTNPYFNATLVSDISIRNSNFGAFEFEDSTLRVVYADHGVVGETKIEGRRVEAHKTVRITGVVVEIGSFRLLDTKDLDKDLRLGFLELRSVAEVRGRIKVLGRKRWKVSVMSCTMRLNLTGRFIQNLLCE.

Residues 41–61 (VYSLTIIVIIFALCLILSSIF) form a helical membrane-spanning segment.

This sequence belongs to the LEA type 2 family.

Its subcellular location is the membrane. This chain is Late embryogenesis abundant protein At1g64065, found in Arabidopsis thaliana (Mouse-ear cress).